A 445-amino-acid polypeptide reads, in one-letter code: Rab GDP dissociation inhibitor beta (445 aa).

Residue methionine 1 is modified to N-acetylmethionine. Lysine 57 carries the post-translational modification N6-succinyllysine. Lysine 112 carries the post-translational modification N6-acetyllysine. Serine 130 carries the post-translational modification Phosphoserine. Lysine 269 carries the N6-acetyllysine modification. Serine 382 bears the Phosphoserine mark.

Belongs to the Rab GDI family. Interacts with RHOH. Interacts with the GDP-bound inactive forms of RAB3A, RAB3B, RAB3C, RAB5A, RAB5B, RAB5C, RAB8A, RAB8B, RAB10, RAB12, RAB35, and RAB43; binds RAB3D to a lesser extent. Interacts with DZIP1; this interaction negatively regulates the interaction of GDI2 with GDP-bound RAB8A.

The protein resides in the cytoplasm. Its subcellular location is the membrane. It localises to the golgi apparatus. It is found in the trans-Golgi network. Its function is as follows. GDP-dissociation inhibitor preventing the GDP to GTP exchange of most Rab proteins. By keeping these small GTPases in their inactive GDP-bound form regulates intracellular membrane trafficking. Negatively regulates protein transport to the cilium and ciliogenesis through the inhibition of RAB8A. This is Rab GDP dissociation inhibitor beta (GDI2) from Canis lupus familiaris (Dog).